The chain runs to 141 residues: Large ribosomal subunit protein uL11 (141 aa).

It belongs to the universal ribosomal protein uL11 family. As to quaternary structure, part of the ribosomal stalk of the 50S ribosomal subunit. Interacts with L10 and the large rRNA to form the base of the stalk. L10 forms an elongated spine to which L12 dimers bind in a sequential fashion forming a multimeric L10(L12)X complex. In terms of processing, one or more lysine residues are methylated.

In terms of biological role, forms part of the ribosomal stalk which helps the ribosome interact with GTP-bound translation factors. The protein is Large ribosomal subunit protein uL11 of Aster yellows witches'-broom phytoplasma (strain AYWB).